A 596-amino-acid polypeptide reads, in one-letter code: MDKNKLIGLILISILLIVYTHFFDNKLPKTSQQTTTQEVAHNTSNIQLQTSEATLNLQTGIFAKATQGVTKDIILENKDIRVTLSSHGAKVKEVILKQYKDYLGKPLKLLDEQSTNMGFQFTSNQASINTNTLFFNTDDTDQYIQQASIGKVTFMIPLGEPNQYLQQVYTLPSEGYALTQNWEFVGTENYIDQGKIDFVWHDFIKRAEKDVQACRNKTTINYYLANKTFKHLKEHTEQKEEQTIQTPIQWLAIKQRFFTAGIFTDQPFESGNILLKPTTQPDKFVKEAYTTVSLASNNLQPIQKGTFRFYFGPNTYKDLNSFAQGFSKNLPLGWPIVKWINLYLIIPIFSFIEKYVSNYGLVILILVIFIKLLLLPLSYKSYISMAEMKVLKPTLDALKAKYGNDMQSVQMEQVKLYREMGINPLSGCIPVLLQMPILLAMFNFFPNAIDLRQKAFLWAPDLSTYDAIINLPFQIPFYGSHVSLFTLLMTASTILYTWSSNQVNTPQGPMKTMSYLLPITFMFILNSFPAGLSFYYFVSNLFTFAQQALIKRFVNEDKIKAKLAKNKEKSANNKEGSFKKRFQDAIKASASHKGKK.

Transmembrane regions (helical) follow at residues 4-24 (NKLIGLILISILLIVYTHFFD), 332-352 (LGWPIVKWINLYLIIPIFSFI), 359-379 (YGLVILILVIFIKLLLLPLSY), 425-445 (LSGCIPVLLQMPILLAMFNFF), 468-488 (IINLPFQIPFYGSHVSLFTLL), and 518-538 (PITFMFILNSFPAGLSFYYFV). The span at 565 to 584 (KNKEKSANNKEGSFKKRFQD) shows a compositional bias: basic and acidic residues. The segment at 565 to 596 (KNKEKSANNKEGSFKKRFQDAIKASASHKGKK) is disordered.

It belongs to the OXA1/ALB3/YidC family. Type 1 subfamily. Interacts with the Sec translocase complex via SecD. Specifically interacts with transmembrane segments of nascent integral membrane proteins during membrane integration.

It localises to the cell inner membrane. Functionally, required for the insertion and/or proper folding and/or complex formation of integral membrane proteins into the membrane. Involved in integration of membrane proteins that insert both dependently and independently of the Sec translocase complex, as well as at least some lipoproteins. Aids folding of multispanning membrane proteins. The chain is Membrane protein insertase YidC from Amoebophilus asiaticus (strain 5a2).